The primary structure comprises 102 residues: Acid shock protein (102 aa).

A signal peptide spans 1 to 21 (MKKVLALVVAAAMGLSSAAFA). Residues 22–41 (AETATTPAPTATTTKAAPAK) are compositionally biased toward low complexity. Positions 22-58 (AETATTPAPTATTTKAAPAKTTHHKKQHKAAPAQKAQ) are excised as a propeptide. The disordered stretch occupies residues 22–102 (AETATTPAPT…PAKPAAQPAA (81 aa)). Over residues 80–90 (AAKKHAGKHGH) the composition is skewed to basic residues. Residues 91-102 (QQPAKPAAQPAA) show a composition bias toward low complexity.

The protein belongs to the Asr family. Proteolytic processing gives rise to the active protein.

It is found in the periplasm. Functionally, required for growth and/or survival at acidic conditions. The chain is Acid shock protein from Shigella flexneri.